Reading from the N-terminus, the 348-residue chain is Dihydroorotase (348 aa).

Zn(2+) is bound by residues H14 and H16. Substrate contacts are provided by residues 16 to 18 and N42; that span reads HLR. K100, H137, and H175 together coordinate Zn(2+). Residue K100 is modified to N6-carboxylysine. H137 contributes to the substrate binding site. Substrate is bound at residue L220. D248 is a Zn(2+) binding site. The active site involves D248. Substrate is bound by residues H252 and A264.

The protein belongs to the metallo-dependent hydrolases superfamily. DHOase family. Class II DHOase subfamily. As to quaternary structure, homodimer. It depends on Zn(2+) as a cofactor.

It catalyses the reaction (S)-dihydroorotate + H2O = N-carbamoyl-L-aspartate + H(+). It participates in pyrimidine metabolism; UMP biosynthesis via de novo pathway; (S)-dihydroorotate from bicarbonate: step 3/3. Functionally, catalyzes the reversible cyclization of carbamoyl aspartate to dihydroorotate. The chain is Dihydroorotase from Pseudomonas fluorescens (strain ATCC BAA-477 / NRRL B-23932 / Pf-5).